A 138-amino-acid polypeptide reads, in one-letter code: Large ribosomal subunit protein bL17 (138 aa).

It belongs to the bacterial ribosomal protein bL17 family. As to quaternary structure, part of the 50S ribosomal subunit. Contacts protein L32.

The polypeptide is Large ribosomal subunit protein bL17 (Halorhodospira halophila (strain DSM 244 / SL1) (Ectothiorhodospira halophila (strain DSM 244 / SL1))).